Consider the following 653-residue polypeptide: Chaperone protein DnaK (653 aa).

Residue T198 is modified to Phosphothreonine; by autocatalysis. Positions D608 to G617 are enriched in low complexity. Residues D608–K653 form a disordered region. Positions M618–G629 are enriched in gly residues. Positions D639 to K653 are enriched in acidic residues.

It belongs to the heat shock protein 70 family.

Its function is as follows. Acts as a chaperone. The protein is Chaperone protein DnaK of Magnetococcus marinus (strain ATCC BAA-1437 / JCM 17883 / MC-1).